The primary structure comprises 458 residues: Glutamyl-tRNA(Gln) amidotransferase subunit D (458 aa).

An Asparaginase/glutaminase domain is found at 97-434; the sequence is PNVSVMSTGG…KEVERLMRTN (338 aa). Catalysis depends on residues threonine 107, threonine 185, aspartate 186, and lysine 264.

It belongs to the asparaginase 1 family. GatD subfamily. In terms of assembly, heterodimer of GatD and GatE.

It catalyses the reaction L-glutamyl-tRNA(Gln) + L-glutamine + ATP + H2O = L-glutaminyl-tRNA(Gln) + L-glutamate + ADP + phosphate + H(+). Functionally, allows the formation of correctly charged Gln-tRNA(Gln) through the transamidation of misacylated Glu-tRNA(Gln) in organisms which lack glutaminyl-tRNA synthetase. The reaction takes place in the presence of glutamine and ATP through an activated gamma-phospho-Glu-tRNA(Gln). The GatDE system is specific for glutamate and does not act on aspartate. In Methanopyrus kandleri (strain AV19 / DSM 6324 / JCM 9639 / NBRC 100938), this protein is Glutamyl-tRNA(Gln) amidotransferase subunit D.